We begin with the raw amino-acid sequence, 486 residues long: Glycogen synthase (486 aa).

An ADP-alpha-D-glucose-binding site is contributed by K15.

Belongs to the glycosyltransferase 1 family. Bacterial/plant glycogen synthase subfamily.

The enzyme catalyses [(1-&gt;4)-alpha-D-glucosyl](n) + ADP-alpha-D-glucose = [(1-&gt;4)-alpha-D-glucosyl](n+1) + ADP + H(+). Its pathway is glycan biosynthesis; glycogen biosynthesis. Synthesizes alpha-1,4-glucan chains using ADP-glucose. The chain is Glycogen synthase from Thermotoga petrophila (strain ATCC BAA-488 / DSM 13995 / JCM 10881 / RKU-1).